A 264-amino-acid chain; its full sequence is Small ribosomal subunit protein eS1B (264 aa).

The segment covering 1 to 19 (MALGKNKRISKGGKRGKRG) has biased composition (basic residues). The segment at 1 to 23 (MALGKNKRISKGGKRGKRGKAQE) is disordered.

The protein belongs to the eukaryotic ribosomal protein eS1 family. Component of the small ribosomal subunit. Mature ribosomes consist of a small (40S) and a large (60S) subunit. The 40S subunit contains about 33 different proteins and 1 molecule of RNA (18S). The 60S subunit contains about 49 different proteins and 3 molecules of RNA (25S, 5.8S and 5S).

It is found in the cytoplasm. The sequence is that of Small ribosomal subunit protein eS1B from Leishmania infantum.